Here is a 414-residue protein sequence, read N- to C-terminus: Dual-specificity RNA methyltransferase RlmN (414 aa).

The active-site Proton acceptor is Glu127. The Radical SAM core domain maps to 133–380; it reads GEGRGTLCVS…SPIRMPRGRD (248 aa). A disulfide bond links Cys140 and Cys385. [4Fe-4S] cluster-binding residues include Cys147, Cys151, and Cys154. Residues 211–212, Ser243, 265–267, and Asn342 contribute to the S-adenosyl-L-methionine site; these read GE and SLH. Cys385 functions as the S-methylcysteine intermediate in the catalytic mechanism.

It belongs to the radical SAM superfamily. RlmN family. [4Fe-4S] cluster serves as cofactor.

The protein resides in the cytoplasm. The enzyme catalyses adenosine(2503) in 23S rRNA + 2 reduced [2Fe-2S]-[ferredoxin] + 2 S-adenosyl-L-methionine = 2-methyladenosine(2503) in 23S rRNA + 5'-deoxyadenosine + L-methionine + 2 oxidized [2Fe-2S]-[ferredoxin] + S-adenosyl-L-homocysteine. It carries out the reaction adenosine(37) in tRNA + 2 reduced [2Fe-2S]-[ferredoxin] + 2 S-adenosyl-L-methionine = 2-methyladenosine(37) in tRNA + 5'-deoxyadenosine + L-methionine + 2 oxidized [2Fe-2S]-[ferredoxin] + S-adenosyl-L-homocysteine. Its function is as follows. Specifically methylates position 2 of adenine 2503 in 23S rRNA and position 2 of adenine 37 in tRNAs. m2A2503 modification seems to play a crucial role in the proofreading step occurring at the peptidyl transferase center and thus would serve to optimize ribosomal fidelity. In Bartonella bacilliformis (strain ATCC 35685 / KC583 / Herrer 020/F12,63), this protein is Dual-specificity RNA methyltransferase RlmN.